We begin with the raw amino-acid sequence, 95 residues long: Small ribosomal subunit protein bS16 (95 aa).

It belongs to the bacterial ribosomal protein bS16 family.

The polypeptide is Small ribosomal subunit protein bS16 (Thermosipho melanesiensis (strain DSM 12029 / CIP 104789 / BI429)).